Here is a 412-residue protein sequence, read N- to C-terminus: Argininosuccinate synthase (412 aa).

Residues 16–24 and Ala44 contribute to the ATP site; that span reads AYSGGLDTS. L-citrulline is bound by residues Tyr96 and Ser101. ATP is bound at residue Gly126. Thr128, Asn132, and Asp133 together coordinate L-aspartate. Asn132 serves as a coordination point for L-citrulline. L-citrulline is bound by residues Arg136, Ser185, Ser194, Glu270, and Tyr282.

Belongs to the argininosuccinate synthase family. Type 1 subfamily. Homotetramer.

The protein localises to the cytoplasm. The catalysed reaction is L-citrulline + L-aspartate + ATP = 2-(N(omega)-L-arginino)succinate + AMP + diphosphate + H(+). Its pathway is amino-acid biosynthesis; L-arginine biosynthesis; L-arginine from L-ornithine and carbamoyl phosphate: step 2/3. The protein is Argininosuccinate synthase of Shewanella baltica (strain OS185).